Consider the following 142-residue polypeptide: Conidial pigment biosynthesis dehydratase EthD (142 aa).

One can recognise an EthD domain in the interval 25-121 (PGMSEAAYRE…PDHQKFADTS (97 aa)).

Belongs to the tpcK family.

The protein operates within pigment biosynthesis. Dehydratase; part of the Pks1 gene cluster that mediates the biosynthesis of an anthraquinone derivative pigment that contributes to conidial pigmentation that provides protection from UV radiation, heat and cold stress. The polyketide synthase Pks1 produces 1-acetyl-2,4,6,8-tetrahydroxy-9,10-anthraquinone though condensation of acetyl-CoA with malonyl-CoA. The dehydratase EthD and the laccase Mlac1 further convert the anthraquinone derivative into the final conidial pigment. This chain is Conidial pigment biosynthesis dehydratase EthD, found in Metarhizium robertsii (strain ARSEF 23 / ATCC MYA-3075) (Metarhizium anisopliae (strain ARSEF 23)).